The sequence spans 222 residues: Germin-like protein subfamily 1 member 16 (222 aa).

The signal sequence occupies residues 1–22; that stretch reads MRVSQSLIPFAIIALVLSFVNA. Cysteines 32 and 48 form a disulfide. One can recognise a Cupin type-1 domain in the interval 62 to 213; the sequence is SGLNVPGNTN…AFQLDANVVK (152 aa). Asn77 carries N-linked (GlcNAc...) asparagine glycosylation. Mn(2+) is bound by residues His110, His112, Glu117, and His159.

The protein belongs to the germin family. Oligomer (believed to be a pentamer but probably hexamer).

Its subcellular location is the secreted. It is found in the extracellular space. The protein localises to the apoplast. Functionally, may play a role in plant defense. Probably has no oxalate oxidase activity even if the active site is conserved. This chain is Germin-like protein subfamily 1 member 16, found in Arabidopsis thaliana (Mouse-ear cress).